A 543-amino-acid chain; its full sequence is CTP synthase (543 aa).

The tract at residues 1-265 (MTRYIFVTGG…DDFVVERFGL (265 aa)) is amidoligase domain. Ser-13 is a binding site for CTP. Residue Ser-13 participates in UTP binding. Residues 14-19 (SLGKGI) and Asp-71 contribute to the ATP site. Asp-71 and Glu-139 together coordinate Mg(2+). Residues 146 to 148 (DIE), 186 to 191 (KTKPTQ), and Lys-222 each bind CTP. Residues 186-191 (KTKPTQ) and Lys-222 contribute to the UTP site. Residues 290-541 (TIAMVGKYME…VKAALAQHQK (252 aa)) enclose the Glutamine amidotransferase type-1 domain. Position 351 (Gly-351) interacts with L-glutamine. The active-site Nucleophile; for glutamine hydrolysis is the Cys-378. Residues 379–382 (LGMQ), Glu-402, and Arg-469 each bind L-glutamine. Active-site residues include His-514 and Glu-516.

This sequence belongs to the CTP synthase family. As to quaternary structure, homotetramer.

It carries out the reaction UTP + L-glutamine + ATP + H2O = CTP + L-glutamate + ADP + phosphate + 2 H(+). The catalysed reaction is L-glutamine + H2O = L-glutamate + NH4(+). The enzyme catalyses UTP + NH4(+) + ATP = CTP + ADP + phosphate + 2 H(+). It functions in the pathway pyrimidine metabolism; CTP biosynthesis via de novo pathway; CTP from UDP: step 2/2. With respect to regulation, allosterically activated by GTP, when glutamine is the substrate; GTP has no effect on the reaction when ammonia is the substrate. The allosteric effector GTP functions by stabilizing the protein conformation that binds the tetrahedral intermediate(s) formed during glutamine hydrolysis. Inhibited by the product CTP, via allosteric rather than competitive inhibition. Functionally, catalyzes the ATP-dependent amination of UTP to CTP with either L-glutamine or ammonia as the source of nitrogen. Regulates intracellular CTP levels through interactions with the four ribonucleotide triphosphates. This chain is CTP synthase, found in Pseudomonas fluorescens (strain Pf0-1).